Reading from the N-terminus, the 1658-residue chain is Silent chromatin protein ESC1 (1658 aa).

The span at 36-54 shows a compositional bias: basic and acidic residues; sequence DSKMKDQHGYSRVHNDKYR. 2 disordered regions span residues 36-76 and 156-499; these read DSKM…SSHI and TSFQ…LENE. Composition is skewed to acidic residues over residues 205 to 214 and 245 to 254; these read LENDEYELSE and SNDEYAEEEG. Positions 262-286 are enriched in polar residues; sequence GQEQANVENATQISSSDSSEGQNYS. Over residues 289–305 the composition is skewed to acidic residues; that stretch reads VEMELEDDIDVESDAEK. Residues 335–352 are compositionally biased toward basic and acidic residues; sequence VIEKYESDEHKVHQRYSE. Acidic residues predominate over residues 365-375; sequence VDDESEDEESQ. The segment covering 386–397 has biased composition (basic and acidic residues); the sequence is VYHHNEHELDDK. Residues 398–407 are compositionally biased toward acidic residues; it reads ELIEDIESSD. A compositionally biased stretch (low complexity) spans 408-417; that stretch reads SESQSAQESE. Basic and acidic residues-rich tracts occupy residues 425–435, 442–461, and 471–482; these read EYKMKNEKSTS, SESRDQGFAKDAYTKNKVEQ, and DDIIRSSLDKNF. Residue T500 is modified to Phosphothreonine. The residue at position 532 (S532) is a Phosphoserine. 2 disordered regions span residues 550–584 and 589–608; these read SRNSNCPQKEEQVSESYLGHSNGSNLSGRSLDESE and LKDFTGENNNNLKTDRGDLS. The span at 568–577 shows a compositional bias: polar residues; the sequence is GHSNGSNLSG. S579, S583, S608, and S662 each carry phosphoserine. Disordered stretches follow at residues 770–819, 863–964, and 1082–1115; these read SKET…EDNT, EMSS…VKGT, and ENNTNMHDQVSQACSDSDRDQDSTAEKNVEGSAK. The span at 800-812 shows a compositional bias: polar residues; the sequence is QSKNFPGVANSTD. Phosphoserine occurs at positions 865 and 866. Positions 869 to 878 are enriched in basic and acidic residues; it reads ECVKQNDDGS. Residues 879–905 are compositionally biased toward polar residues; that stretch reads KTQISFSTDSPDNFQESNDNTEFSSTK. Phosphoserine is present on residues S888 and S911. Residues 918-931 show a composition bias toward basic and acidic residues; the sequence is SLKKELTKAEVVDK. The span at 932–956 shows a compositional bias: acidic residues; sequence LDEEESEDSYEQDYADPEPGNDEGS. Phosphoserine is present on residues S937, S1092, S1096, S1098, S1166, S1176, and S1178. Residues 1082–1096 are compositionally biased toward polar residues; the sequence is ENNTNMHDQVSQACS. The segment covering 1097–1115 has biased composition (basic and acidic residues); it reads DSDRDQDSTAEKNVEGSAK. Residues 1197 to 1207 are compositionally biased toward polar residues; it reads STDASVNMKSV. A disordered region spans residues 1197 to 1216; it reads STDASVNMKSVSSKERDSDE. S1214 and S1254 each carry phosphoserine. Positions 1261-1272 are enriched in basic and acidic residues; it reads VKDKENLHKSEE. Residues 1261 to 1315 are disordered; the sequence is VKDKENLHKSEEPLVEGLQSEQHFEKKDHSENEEEFDTIYGDITSANIHSNAPDD. Residues S1290, S1326, and S1332 each carry the phosphoserine modification. 2 disordered regions span residues 1334-1482 and 1503-1658; these read RLIE…TSPE and PATT…SVDK. Residues 1335 to 1366 are compositionally biased toward basic and acidic residues; sequence LIEDSRRGKNQEESDEVNTSRERDLTFEKSVN. Residues S1403, S1409, S1450, and S1454 each carry the phosphoserine modification. The segment covering 1407 to 1423 has biased composition (acidic residues); the sequence is LNSEPEEAELYELEIEG. Over residues 1463 to 1479 the composition is skewed to polar residues; sequence YPYSNSENITAEKSAPT. Residues 1507 to 1537 are compositionally biased toward basic and acidic residues; sequence LEKHDKTNVTSVLDDRSEHLSSHDVDNEPHD. S1539 bears the Phosphoserine mark. Basic and acidic residues-rich tracts occupy residues 1550-1564 and 1575-1591; these read PEHQAVDIPVKVEVK and VLEEQKPSMELINDKSS. A phosphoserine mark is found at S1590 and S1591. Basic residues predominate over residues 1607 to 1626; it reads TKAKKKSRKRNYNSRRRKRK. A compositionally biased stretch (polar residues) spans 1648-1658; it reads RGQNTHPSVDK.

As to quaternary structure, interacts with SIR4.

The protein localises to the nucleus. Functionally, involved in the clustering of telomeres at the nuclear periphery, forming discrete subcompartments that accumulate a complex of histone-binding silencing factors like SIR4. Required for SIR4-mediated anchoring and partitioning of plasmids. In Saccharomyces cerevisiae (strain ATCC 204508 / S288c) (Baker's yeast), this protein is Silent chromatin protein ESC1 (ESC1).